The sequence spans 310 residues: Probable deoxyhypusine synthase (310 aa).

Catalysis depends on Lys284, which acts as the Nucleophile.

It belongs to the deoxyhypusine synthase family. NAD(+) is required as a cofactor.

The catalysed reaction is [eIF5A protein]-L-lysine + spermidine = [eIF5A protein]-deoxyhypusine + propane-1,3-diamine. The protein operates within protein modification; eIF5A hypusination. Functionally, catalyzes the NAD-dependent oxidative cleavage of spermidine and the subsequent transfer of the butylamine moiety of spermidine to the epsilon-amino group of a specific lysine residue of the eIF-5A precursor protein to form the intermediate deoxyhypusine residue. The protein is Probable deoxyhypusine synthase (dys) of Thermoplasma volcanium (strain ATCC 51530 / DSM 4299 / JCM 9571 / NBRC 15438 / GSS1).